The following is a 105-amino-acid chain: Vitelline membrane protein Vm32E (105 aa).

A signal peptide spans 1–17 (MHFIALIVAVCVAFAGA). The 38-residue stretch at 25 to 62 (GIAAPPCPKNYLFSCQPNLVPAPCAQEAASYGSAGAYA) folds into the VM domain.

This sequence belongs to the vitelline membrane family.

The protein localises to the secreted. In terms of biological role, major early eggshell protein. The chain is Vitelline membrane protein Vm32E from Drosophila ananassae (Fruit fly).